The following is a 136-amino-acid chain: Transmembrane protein 203 (136 aa).

The interaction with STING1 stretch occupies residues 1 to 51 (MLFSLRELVQWLGFATFEIFVHLLALLVFSVLLALRVDGLVPGLSWWNVFV). The next 4 helical transmembrane spans lie at 14–34 (FATF…VLLA), 50–72 (FVPF…VRLF), 81–101 (VLRL…EMLL), and 112–132 (LWFG…MIRA). Positions 52-136 (PFFAADGLST…LLMIRACRVN (85 aa)) are required for the lysosomal localization of the STING-TMEM203 complex.

As to quaternary structure, homodimer. Interacts with ATP2A2, ITPR3 and STIM1. Interacts with STING1 (via transmembrane domain). In terms of tissue distribution, increased expression seen in T-lymphocytes from patients with systemic lupus erythematosus (SLE).

Its subcellular location is the endoplasmic reticulum membrane. It localises to the endoplasmic reticulum-Golgi intermediate compartment. It is found in the lysosome membrane. Its function is as follows. Involved in the regulation of cellular calcium homeotasis. Required for spermatogenesis. Acts as a regulator of STING-mediated inflammatory signaling in macrophages. Forms a complex with STING, promoting the activity of TBK1 kinase and the transcription factor IRF3, leading to activation of type I interferon expression. This Homo sapiens (Human) protein is Transmembrane protein 203 (TMEM203).